We begin with the raw amino-acid sequence, 79 residues long: Peptide Im-5 (79 aa).

Residues 1 to 23 (MKYRKQLLVLFFAYFLVVNESEA) form the signal peptide. Residues 49–79 (RALMKRDLQDRMDPYQRNLKLDRYLKQLALD) constitute a propeptide that is removed on maturation.

It belongs to the non-disulfide-bridged peptide (NDBP) superfamily. Medium-length antimicrobial peptide (group 3) family. In terms of tissue distribution, expressed by the venom gland.

It localises to the secreted. Its subcellular location is the target cell membrane. In terms of biological role, antimicrobial peptide that may act by disrupting the integrity of the bacterial cell membrane. Has antibacterial activity against Gram-negative bacterium E.coli NBRC 3972 (MIC=10 uM) and against Gram-positive bacteria S.aureus NBRC 13276 (MIC=2.5-5 uM) and B.subtilis NBRC 3009 (MIC=0.5-1 uM). Also shows potent activity against antibiotic-sensitive and -resistant Acinetobacter baumannii (MIC=1.8-3.6 uM). Shows cytolytic activity against human and sheep erythrocytes. Toxic to cricket A.domestica. In Isometrus maculatus (Lesser brown scorpion), this protein is Peptide Im-5.